Here is a 163-residue protein sequence, read N- to C-terminus: Nucleotide-binding protein MS1759 (163 aa).

It belongs to the YajQ family.

Functionally, nucleotide-binding protein. This chain is Nucleotide-binding protein MS1759, found in Mannheimia succiniciproducens (strain KCTC 0769BP / MBEL55E).